The following is a 626-amino-acid chain: DNA mismatch repair protein MutL (626 aa).

This sequence belongs to the DNA mismatch repair MutL/HexB family.

Functionally, this protein is involved in the repair of mismatches in DNA. It is required for dam-dependent methyl-directed DNA mismatch repair. May act as a 'molecular matchmaker', a protein that promotes the formation of a stable complex between two or more DNA-binding proteins in an ATP-dependent manner without itself being part of a final effector complex. The chain is DNA mismatch repair protein MutL from Cellvibrio japonicus (strain Ueda107) (Pseudomonas fluorescens subsp. cellulosa).